The primary structure comprises 326 residues: Malate dehydrogenase (326 aa).

11–17 is an NAD(+) binding site; sequence GAAGQIG. Substrate is bound by residues R92 and R98. NAD(+) is bound by residues N105, Q112, and 129–131; that span reads VGN. Substrate-binding residues include N131 and R162. The active-site Proton acceptor is the H187.

Belongs to the LDH/MDH superfamily. MDH type 2 family.

The enzyme catalyses (S)-malate + NAD(+) = oxaloacetate + NADH + H(+). In terms of biological role, catalyzes the reversible oxidation of malate to oxaloacetate. The protein is Malate dehydrogenase of Alkalilimnicola ehrlichii (strain ATCC BAA-1101 / DSM 17681 / MLHE-1).